A 199-amino-acid polypeptide reads, in one-letter code: Dephospho-CoA kinase (199 aa).

Positions 3-199 (ILGLTGSIGM…ATAKMPQRRA (197 aa)) constitute a DPCK domain. 11-16 (GMGKST) contacts ATP.

This sequence belongs to the CoaE family.

Its subcellular location is the cytoplasm. The catalysed reaction is 3'-dephospho-CoA + ATP = ADP + CoA + H(+). The protein operates within cofactor biosynthesis; coenzyme A biosynthesis; CoA from (R)-pantothenate: step 5/5. In terms of biological role, catalyzes the phosphorylation of the 3'-hydroxyl group of dephosphocoenzyme A to form coenzyme A. The polypeptide is Dephospho-CoA kinase (Rhodopseudomonas palustris (strain BisB18)).